We begin with the raw amino-acid sequence, 454 residues long: UDP-N-acetylmuramoylalanine--D-glutamate ligase (454 aa).

114–120 serves as a coordination point for ATP; sequence GTNGKTT.

Belongs to the MurCDEF family.

Its subcellular location is the cytoplasm. The catalysed reaction is UDP-N-acetyl-alpha-D-muramoyl-L-alanine + D-glutamate + ATP = UDP-N-acetyl-alpha-D-muramoyl-L-alanyl-D-glutamate + ADP + phosphate + H(+). The protein operates within cell wall biogenesis; peptidoglycan biosynthesis. Functionally, cell wall formation. Catalyzes the addition of glutamate to the nucleotide precursor UDP-N-acetylmuramoyl-L-alanine (UMA). This chain is UDP-N-acetylmuramoylalanine--D-glutamate ligase, found in Desulfitobacterium hafniense (strain Y51).